Consider the following 326-residue polypeptide: Intracellular serine protease (326 aa).

A Peptidase S8 domain is found at proline 23–glutamate 303. Catalysis depends on charge relay system residues aspartate 49, histidine 86, and serine 244.

This sequence belongs to the peptidase S8 family.

Its function is as follows. Involved in the generation of beta- and alpha-amylases from the large amylase precursor. The protein is Intracellular serine protease (isp) of Paenibacillus polymyxa (Bacillus polymyxa).